A 236-amino-acid polypeptide reads, in one-letter code: Ureidoacrylate amidohydrolase RutB (236 aa).

Residue Asp24 is the Proton acceptor of the active site. Lys133 is a catalytic residue. The Nucleophile role is filled by Cys166.

This sequence belongs to the isochorismatase family. RutB subfamily.

It carries out the reaction (Z)-3-ureidoacrylate + H2O + H(+) = (Z)-3-aminoacrylate + NH4(+) + CO2. The enzyme catalyses (Z)-3-ureidoacrylate + H2O = (Z)-3-aminoacrylate + carbamate + H(+). It catalyses the reaction (Z)-2-methylureidoacrylate + H2O + H(+) = (Z)-2-methylaminoacrylate + NH4(+) + CO2. Hydrolyzes ureidoacrylate to form aminoacrylate and carbamate. The carbamate hydrolyzes spontaneously, thereby releasing one of the nitrogen atoms of the pyrimidine ring as ammonia and one of its carbon atoms as CO2. This Klebsiella pneumoniae (strain 342) protein is Ureidoacrylate amidohydrolase RutB.